A 297-amino-acid polypeptide reads, in one-letter code: Protease HtpX homolog (297 aa).

A run of 2 helical transmembrane segments spans residues 5 to 25 and 44 to 64; these read IFLF…VLSI and IVAL…MSLL. Histidine 155 provides a ligand contact to Zn(2+). Residue glutamate 156 is part of the active site. Histidine 159 contacts Zn(2+). 2 helical membrane-spanning segments follow: residues 170–190 and 204–224; these read LLQG…AWAV and FIAV…VVFA. Glutamate 230 serves as a coordination point for Zn(2+).

The protein belongs to the peptidase M48B family. Zn(2+) serves as cofactor.

It localises to the cell membrane. This Bacillus licheniformis (strain ATCC 14580 / DSM 13 / JCM 2505 / CCUG 7422 / NBRC 12200 / NCIMB 9375 / NCTC 10341 / NRRL NRS-1264 / Gibson 46) protein is Protease HtpX homolog.